The following is a 360-amino-acid chain: METLTVGLGDRSYTIRGGSGILPGIGAFCRELGLGRIVAVVTNTTVGPLYYGPVADSLAAAGFSPLRVELPDGEEFKTSATMNIIYDALIDGGLTRDSFIVALGGGVVGDMAGFAAATYLRGIPFVQVPTTLLAQVDSSVGGKTGINHPRGKNLIGAFYQPRAVVIDVETLTTLPEREYLAGMAEVVKYGVVLDPQLFAEVERNITPILARDRDVLTRIIMACCAIKASVVEKDERESGLRAVLNYGHTLGHAVETLAGYGTFLHGEAVAIGMVQAAKLAEHRGEATADDTGRLRALLESLKLPVELPVFAAEAYREVLLRDKKARDTGLSFVLNNGIGGFSIVRLRDLSEVIDVCGIGG.

NAD(+)-binding positions include 72–77, 106–110, 130–131, Lys-143, Lys-152, and 170–173; these read DGEEFK, GVVGD, TT, and TLTT. Positions 185, 248, and 265 each coordinate Zn(2+).

Belongs to the sugar phosphate cyclases superfamily. Dehydroquinate synthase family. It depends on Co(2+) as a cofactor. Zn(2+) serves as cofactor. NAD(+) is required as a cofactor.

It localises to the cytoplasm. It catalyses the reaction 7-phospho-2-dehydro-3-deoxy-D-arabino-heptonate = 3-dehydroquinate + phosphate. It participates in metabolic intermediate biosynthesis; chorismate biosynthesis; chorismate from D-erythrose 4-phosphate and phosphoenolpyruvate: step 2/7. Its function is as follows. Catalyzes the conversion of 3-deoxy-D-arabino-heptulosonate 7-phosphate (DAHP) to dehydroquinate (DHQ). In Geobacter metallireducens (strain ATCC 53774 / DSM 7210 / GS-15), this protein is 3-dehydroquinate synthase.